The chain runs to 681 residues: Potassium-transporting ATPase ATP-binding subunit 1 (681 aa).

A run of 4 helical transmembrane segments spans residues 30-50, 59-79, 216-236, and 255-275; these read LLVYVGAILATSLYFLGFFGI, LAIALILWFTVLFANFAEAIA, ILLVTLSIIFLAVSATLLPFT, and IALLVCLAPTTIGALLSSIGI. The active-site 4-aspartylphosphate intermediate is the Asp-306. ATP contacts are provided by residues Asp-343, Glu-347, 376-383, and Lys-394; that span reads FTATTRMS. Residues Asp-517 and Asp-521 each contribute to the Mg(2+) site. A run of 3 helical transmembrane segments spans residues 587-607, 615-635, and 661-681; these read FAIIPVLFYGIFPQLEALNLM, AILSAIIYNAVIIIFLIPLSL, and LIAPFIAIKLIDMLLTVLGIV.

It belongs to the cation transport ATPase (P-type) (TC 3.A.3) family. Type IA subfamily. In terms of assembly, the system is composed of three essential subunits: KdpA, KdpB and KdpC.

The protein localises to the cell membrane. It catalyses the reaction K(+)(out) + ATP + H2O = K(+)(in) + ADP + phosphate + H(+). Functionally, part of the high-affinity ATP-driven potassium transport (or Kdp) system, which catalyzes the hydrolysis of ATP coupled with the electrogenic transport of potassium into the cytoplasm. This subunit is responsible for energy coupling to the transport system and for the release of the potassium ions to the cytoplasm. The chain is Potassium-transporting ATPase ATP-binding subunit 1 from Listeria innocua serovar 6a (strain ATCC BAA-680 / CLIP 11262).